The chain runs to 615 residues: DNA mismatch repair protein MutL (615 aa).

The span at 378–391 (PAPASGSRPAAPWP) shows a compositional bias: low complexity. Positions 378 to 397 (PAPASGSRPAAPWPNAQPGY) are disordered.

Belongs to the DNA mismatch repair MutL/HexB family.

Functionally, this protein is involved in the repair of mismatches in DNA. It is required for dam-dependent methyl-directed DNA mismatch repair. May act as a 'molecular matchmaker', a protein that promotes the formation of a stable complex between two or more DNA-binding proteins in an ATP-dependent manner without itself being part of a final effector complex. This Escherichia coli O127:H6 (strain E2348/69 / EPEC) protein is DNA mismatch repair protein MutL.